Reading from the N-terminus, the 582-residue chain is Proline--tRNA ligase (582 aa).

Belongs to the class-II aminoacyl-tRNA synthetase family. ProS type 1 subfamily. Homodimer.

The protein resides in the cytoplasm. It carries out the reaction tRNA(Pro) + L-proline + ATP = L-prolyl-tRNA(Pro) + AMP + diphosphate. Its function is as follows. Catalyzes the attachment of proline to tRNA(Pro) in a two-step reaction: proline is first activated by ATP to form Pro-AMP and then transferred to the acceptor end of tRNA(Pro). As ProRS can inadvertently accommodate and process non-cognate amino acids such as alanine and cysteine, to avoid such errors it has two additional distinct editing activities against alanine. One activity is designated as 'pretransfer' editing and involves the tRNA(Pro)-independent hydrolysis of activated Ala-AMP. The other activity is designated 'posttransfer' editing and involves deacylation of mischarged Ala-tRNA(Pro). The misacylated Cys-tRNA(Pro) is not edited by ProRS. This is Proline--tRNA ligase from Mycobacterium tuberculosis (strain CDC 1551 / Oshkosh).